The following is a 305-amino-acid chain: Tetraspanin-12 (305 aa).

The Cytoplasmic segment spans residues 1-12 (MAREDSVRCLRC). 2 S-palmitoyl cysteine lipidation sites follow: Cys-9 and Cys-12. Residues 13–33 (LLYALNLLFWLMSISVLGVSA) form a helical membrane-spanning segment. The Extracellular segment spans residues 34 to 59 (WIRDYLNNVLTLTAETRVEEAVILTY). Residues 60–80 (FPVVHPVMIAVCCFLILVGML) form a helical membrane-spanning segment. The Cytoplasmic portion of the chain corresponds to 81–89 (GYCGTVKRN). The S-palmitoyl cysteine moiety is linked to residue Cys-83. The chain crosses the membrane as a helical span at residues 90–110 (LLLLVWYFGSLLVIFCVELAC). The Extracellular portion of the chain corresponds to 111-224 (GVWTYEQEIT…RGTKQLQVLR (114 aa)). A helical transmembrane segment spans residues 225-245 (FLGISIGVTQILAMILTITLL). The Cytoplasmic segment spans residues 246–305 (WALYYDRRDPGADQIMSLKNDTSQQLSCHSVELLKPSLTGIFEHTSMANSFNTHFEMEEL).

The protein belongs to the tetraspanin (TM4SF) family. Component of a complex, at least composed of TSPAN12, FZD4 and norrin (NDP). In terms of processing, palmitoylated; required for interaction with ADAM10. The precise position of palmitoylated residues is unclear and occurs either on Cys-9, Cys-12 and/or Cys-83.

It is found in the cell membrane. Regulator of cell surface receptor signal transduction. Plays a central role in retinal vascularization by regulating norrin (NDP) signal transduction. Acts in concert with norrin (NDP) to promote FZD4 multimerization and subsequent activation of FZD4, leading to promote accumulation of beta-catenin (CTNNB1) and stimulate LEF/TCF-mediated transcriptional programs. Suprisingly, it only activates the norrin (NDP)-dependent activation of FZD4, while it does not activate the Wnt-dependent activation of FZD4, suggesting the existence of a Wnt-independent signaling that also promote accumulation the beta-catenin (CTNNB1). The sequence is that of Tetraspanin-12 (TSPAN12) from Gallus gallus (Chicken).